A 305-amino-acid polypeptide reads, in one-letter code: Ribonuclease HIII (305 aa).

In terms of domain architecture, RNase H type-2 spans 91-305 (WSVIGSDEVG…ANTQKAQKLL (215 aa)). Residues Asp97, Glu98, and Asp201 each contribute to the a divalent metal cation site.

This sequence belongs to the RNase HII family. RnhC subfamily. It depends on Mn(2+) as a cofactor. Mg(2+) is required as a cofactor.

It localises to the cytoplasm. The enzyme catalyses Endonucleolytic cleavage to 5'-phosphomonoester.. Functionally, endonuclease that specifically degrades the RNA of RNA-DNA hybrids. This Enterococcus faecalis (strain ATCC 700802 / V583) protein is Ribonuclease HIII.